Consider the following 131-residue polypeptide: NADPH-dependent 7-cyano-7-deazaguanine reductase (131 aa).

The active-site Thioimide intermediate is the C48. D55 functions as the Proton donor in the catalytic mechanism. Residues 70–72 and 89–90 each bind substrate; these read VEL and QE.

Belongs to the GTP cyclohydrolase I family. QueF type 1 subfamily.

The protein localises to the cytoplasm. The catalysed reaction is 7-aminomethyl-7-carbaguanine + 2 NADP(+) = 7-cyano-7-deazaguanine + 2 NADPH + 3 H(+). It participates in tRNA modification; tRNA-queuosine biosynthesis. In terms of biological role, catalyzes the NADPH-dependent reduction of 7-cyano-7-deazaguanine (preQ0) to 7-aminomethyl-7-deazaguanine (preQ1). This chain is NADPH-dependent 7-cyano-7-deazaguanine reductase, found in Caldicellulosiruptor bescii (strain ATCC BAA-1888 / DSM 6725 / KCTC 15123 / Z-1320) (Anaerocellum thermophilum).